Reading from the N-terminus, the 315-residue chain is Neuroguidin (315 aa).

Alanine 2 carries the N-acetylalanine modification. Residues 7-41 are a coiled coil; the sequence is LESDVSSSITLLKNLQEQVMAVTAQIQALTTKVRA. A necessary for interaction with EIF4E region spans residues 41–174; sequence AGTYSTEKGL…KGSAKKYVPP (134 aa). Serine 121, serine 142, and serine 143 each carry phosphoserine. The tract at residues 123–190 is disordered; sequence SENDPLRFKP…YDETEAEREQ (68 aa). The segment covering 144–155 has biased composition (acidic residues); the sequence is EDEEESEAEEGQ. Over residues 180-190 the composition is skewed to basic and acidic residues; that stretch reads HYDETEAEREQ. The stretch at 181–203 forms a coiled coil; it reads YDETEAEREQKRLEKAKRRALSS. Residues serine 204 and serine 214 each carry the phosphoserine modification. 2 stretches are compositionally biased toward basic and acidic residues: residues 212-225 and 232-241; these read QYSD…DARH and SQEDQHRVNY. Disordered stretches follow at residues 212–243 and 284–315; these read QYSD…NYEE and GTAH…RRRW. Residues 295–315 show a composition bias toward basic residues; it reads VKKRKKLPKKGRKKKGFRRRW.

Belongs to the SAS10 family. As to quaternary structure, interacts with CPEB1 and EIF4E. As to expression, expressed in testis, ovary, spleen, kidney, hippocampus and cerebellum (at protein level). Expressed in testis, ovary, spleen, kidney, brain.

Its subcellular location is the nucleus. It localises to the nucleolus. The protein localises to the chromosome. It is found in the centromere. The protein resides in the cytoplasm. Its subcellular location is the cell projection. It localises to the axon. The protein localises to the dendrite. It is found in the filopodium. In terms of biological role, part of the small subunit (SSU) processome, first precursor of the small eukaryotic ribosomal subunit. During the assembly of the SSU processome in the nucleolus, many ribosome biogenesis factors, an RNA chaperone and ribosomal proteins associate with the nascent pre-rRNA and work in concert to generate RNA folding, modifications, rearrangements and cleavage as well as targeted degradation of pre-ribosomal RNA by the RNA exosome. Its dissociation from the complex determines the transition from state pre-A1 to state pre-A1*. Inhibits mRNA translation in a cytoplasmic polyadenylation element (CPE)-dependent manner. This Mus musculus (Mouse) protein is Neuroguidin (Ngdn).